We begin with the raw amino-acid sequence, 583 residues long: Pectinesterase/pectinesterase inhibitor U1 (583 aa).

A signal peptide spans 1–40 (MTRVEDFFSKQIDFCKRKKKIYLAIVASVLLVAAVIGVVA). Positions 60–221 (SSAHAIVKSA…EKMCSNALAM (162 aa)) are pectinesterase inhibitor U1. N-linked (GlcNAc...) asparagine glycans are attached at residues asparagine 85, asparagine 105, and asparagine 224. The pectinesterase U1 stretch occupies residues 272–570 (DVVVAADGSG…TPGRFIAGGS (299 aa)). Substrate is bound by residues threonine 347 and glutamine 377. The Proton donor; for pectinesterase activity role is filled by aspartate 400. A disulfide bridge links cysteine 414 with cysteine 434. Catalysis depends on aspartate 421, which acts as the Nucleophile; for pectinesterase activity. Substrate-binding residues include arginine 489 and tryptophan 491.

In the N-terminal section; belongs to the PMEI family. The protein in the C-terminal section; belongs to the pectinesterase family.

It is found in the secreted. The protein resides in the cell wall. It carries out the reaction [(1-&gt;4)-alpha-D-galacturonosyl methyl ester](n) + n H2O = [(1-&gt;4)-alpha-D-galacturonosyl](n) + n methanol + n H(+). The protein operates within glycan metabolism; pectin degradation; 2-dehydro-3-deoxy-D-gluconate from pectin: step 1/5. Functionally, acts in the modification of cell walls via demethylesterification of cell wall pectin. This is Pectinesterase/pectinesterase inhibitor U1 (PMEU1) from Solanum lycopersicum (Tomato).